A 320-amino-acid polypeptide reads, in one-letter code: MLYSCLASKTTFHFAAGLCSGLTSSILLQPADLLKTRVQQSQKTASLLPTIKTILSSPHPIRGLWRGTLPSALRTGFGSALYFTSLNALRQGLAQTEAAMAIAASSSDGKSRTSSSALPKLSNWGNLATGAVARTAAGFVMMPVTVLKVRYESDYYAYRSLYSAGRDIVRTEGVRGLFSGFGATAARDAPYAGLYVLFYEQLKRRLALVASSEQSEQPLKSTSSSSINFVSGGLAAGLATAITNPFDAVKTRLQLMPGKYGNMIRAVRLMIREDGVRSLFGGLGLRITRKALSSALAWTVYEELILRAEARWAEKDKIDL.

Solcar repeat units lie at residues 8–92 (SKTT…LRQG), 121–205 (LSNW…LKRR), and 223–307 (SSSS…LILR). 6 helical membrane passes run 14-39 (FAAG…TRVQ), 67-93 (GTLP…RQGL), 127-152 (LATG…VRYE), 180-203 (GFGA…EQLK), 227-253 (INFV…KTRL), and 282-300 (GLGL…AWTV).

Belongs to the mitochondrial carrier (TC 2.A.29) family. SLC25A38 subfamily.

Its subcellular location is the mitochondrion inner membrane. The catalysed reaction is glycine(in) = glycine(out). Its function is as follows. Mitochondrial glycine transporter that imports glycine into the mitochondrial matrix. Plays an important role in providing glycine for the first enzymatic step in heme biosynthesis, the condensation of glycine with succinyl-CoA to produce 5-aminolevulinate (ALA) in the mitochondrial matrix. This is Mitochondrial glycine transporter from Aspergillus fumigatus (strain CBS 144.89 / FGSC A1163 / CEA10) (Neosartorya fumigata).